The sequence spans 42 residues: Thymosin beta-10 (42 aa).

Composition is skewed to basic and acidic residues over residues 1–25 (MADK…ETQE) and 33–42 (ETIEQEKQAK). The segment at 1–42 (MADKPDLGEINSFDKAKLKKTETQEKNTLPTKETIEQEKQAK) is disordered. An N-acetylalanine modification is found at Ala-2. Lys-4 is subject to N6-acetyllysine. A Phosphoserine modification is found at Ser-12. The residue at position 15 (Lys-15) is an N6-acetyllysine. Thr-21, Thr-23, and Thr-34 each carry phosphothreonine. Lys-39 carries the post-translational modification N6-acetyllysine.

The protein belongs to the thymosin beta family. As to expression, distributed in numerous types of tissues, including thymus, spleen, lung, liver and muscle.

The protein resides in the cytoplasm. It is found in the cytoskeleton. In terms of biological role, plays an important role in the organization of the cytoskeleton. Binds to and sequesters actin monomers (G actin) and therefore inhibits actin polymerization. The chain is Thymosin beta-10 (TMSB10) from Bos taurus (Bovine).